Here is a 143-residue protein sequence, read N- to C-terminus: Universal stress protein A (143 aa).

Belongs to the universal stress protein A family. In terms of assembly, homodimer.

The protein resides in the cytoplasm. Functionally, required for resistance to DNA-damaging agents. The protein is Universal stress protein A (uspA) of Photorhabdus laumondii subsp. laumondii (strain DSM 15139 / CIP 105565 / TT01) (Photorhabdus luminescens subsp. laumondii).